The following is a 444-amino-acid chain: L-cysteine:1D-myo-inositol 2-amino-2-deoxy-alpha-D-glucopyranoside ligase (444 aa).

Cys66 contacts Zn(2+). Residues 66–69, Thr81, and 104–106 each bind L-cysteinyl-5'-AMP; these read CGIT and NVT. The short motif at 68–78 is the 'HIGH' region element; the sequence is ITPYDATHLGH. The 'ERGGDP' region signature appears at 206 to 211; the sequence is EHGGDP. Trp246 is an L-cysteinyl-5'-AMP binding site. Cys250 is a Zn(2+) binding site. An L-cysteinyl-5'-AMP-binding site is contributed by 268–270; it reads GSD. Residue His275 coordinates Zn(2+). An L-cysteinyl-5'-AMP-binding site is contributed by Val302. The 'KMSKS' region signature appears at 308-312; that stretch reads KMSKS.

This sequence belongs to the class-I aminoacyl-tRNA synthetase family. MshC subfamily. In terms of assembly, monomer. It depends on Zn(2+) as a cofactor.

It carries out the reaction 1D-myo-inositol 2-amino-2-deoxy-alpha-D-glucopyranoside + L-cysteine + ATP = 1D-myo-inositol 2-(L-cysteinylamino)-2-deoxy-alpha-D-glucopyranoside + AMP + diphosphate + H(+). In terms of biological role, catalyzes the ATP-dependent condensation of GlcN-Ins and L-cysteine to form L-Cys-GlcN-Ins. This chain is L-cysteine:1D-myo-inositol 2-amino-2-deoxy-alpha-D-glucopyranoside ligase, found in Parafrankia sp. (strain EAN1pec).